The following is a 318-amino-acid chain: D-alanine--D-alanine ligase (318 aa).

The ATP-grasp domain occupies 116 to 311 (KQVWQSLGIP…FQQLVLAILA (196 aa)). Residue 142 to 197 (STELGFPLIVKPAHEGSSIGMAKVNSAQELVAAWQDAAKYDSQVLVEQWIHGPEFT) coordinates ATP. 3 residues coordinate Mg(2+): Asp265, Glu278, and Asn280.

This sequence belongs to the D-alanine--D-alanine ligase family. Requires Mg(2+) as cofactor. The cofactor is Mn(2+).

Its subcellular location is the cytoplasm. It carries out the reaction 2 D-alanine + ATP = D-alanyl-D-alanine + ADP + phosphate + H(+). It participates in cell wall biogenesis; peptidoglycan biosynthesis. Its function is as follows. Cell wall formation. This chain is D-alanine--D-alanine ligase, found in Pseudomonas putida (strain GB-1).